We begin with the raw amino-acid sequence, 526 residues long: Protein translocase subunit SecD (526 aa).

A run of 6 helical transmembrane segments spans residues 8 to 28, 356 to 376, 379 to 399, 405 to 425, 453 to 473, and 478 to 498; these read LIVFIFALLLGVGFSVPSLLE, IIALVGGFILVMGFMALYYSM, VIACMALVVNLFLIVAVMAIF, LPGMAGIVLTVGIAVDANIII, AIFDSNITSLIASVLLYAYGT, and GFALTTGIGILASIITAIIGT.

The protein belongs to the SecD/SecF family. SecD subfamily. Forms a complex with SecF. Part of the essential Sec protein translocation apparatus which comprises SecA, SecYEG and auxiliary proteins SecDF-YajC and YidC.

The protein resides in the cell inner membrane. In terms of biological role, part of the Sec protein translocase complex. Interacts with the SecYEG preprotein conducting channel. SecDF uses the proton motive force (PMF) to complete protein translocation after the ATP-dependent function of SecA. The protein is Protein translocase subunit SecD of Helicobacter pylori (strain J99 / ATCC 700824) (Campylobacter pylori J99).